Here is a 379-residue protein sequence, read N- to C-terminus: Cytochrome b (379 aa).

4 helical membrane passes run 33 to 53 (FGSLLGMCLMIQILTGLFLAM), 77 to 98 (WLIRYLHANGASMFFICLFIHV), 113 to 133 (WNIGIILFLTTMATAFVGYVL), and 178 to 198 (FFAFHFILPFIITAFALVHLL). Residues His83 and His97 each coordinate heme b. Positions 182 and 196 each coordinate heme b. His201 serves as a coordination point for a ubiquinone. 4 helical membrane-spanning segments follow: residues 226-246 (TKDLLGIFLLLLVLMILALFF), 288-308 (LGGVLALVLSILILAAFPLLN), 320-340 (ITQVIYWIFIANLLVLTWIGG), and 347-367 (FTMIGQIASITYFAIIIILIP).

This sequence belongs to the cytochrome b family. The cytochrome bc1 complex contains 11 subunits: 3 respiratory subunits (MT-CYB, CYC1 and UQCRFS1), 2 core proteins (UQCRC1 and UQCRC2) and 6 low-molecular weight proteins (UQCRH/QCR6, UQCRB/QCR7, UQCRQ/QCR8, UQCR10/QCR9, UQCR11/QCR10 and a cleavage product of UQCRFS1). This cytochrome bc1 complex then forms a dimer. The cofactor is heme b.

Its subcellular location is the mitochondrion inner membrane. Component of the ubiquinol-cytochrome c reductase complex (complex III or cytochrome b-c1 complex) that is part of the mitochondrial respiratory chain. The b-c1 complex mediates electron transfer from ubiquinol to cytochrome c. Contributes to the generation of a proton gradient across the mitochondrial membrane that is then used for ATP synthesis. This chain is Cytochrome b (MT-CYB), found in Akodon spegazzinii (Spegazzini's grass mouse).